Consider the following 440-residue polypeptide: GTPase Der (440 aa).

EngA-type G domains follow at residues 3–167 (PIIA…PYDR) and 176–351 (TRIA…EQYC). GTP-binding positions include 9-16 (GRPNVGKS), 56-60 (DTGGF), 119-122 (NKVD), 182-189 (GRPNVGKS), 229-233 (DTAGI), and 294-297 (NKWD). In terms of domain architecture, KH-like spans 352–436 (KRVTTGELNR…PLKLIFRGRD (85 aa)).

It belongs to the TRAFAC class TrmE-Era-EngA-EngB-Septin-like GTPase superfamily. EngA (Der) GTPase family. Associates with the 50S ribosomal subunit.

In terms of biological role, GTPase that plays an essential role in the late steps of ribosome biogenesis. This Citrifermentans bemidjiense (strain ATCC BAA-1014 / DSM 16622 / JCM 12645 / Bem) (Geobacter bemidjiensis) protein is GTPase Der.